The following is an 86-amino-acid chain: MANIKSAIKRVEVNEKKRVSNSKQLSAMRTEVKRVEKAVEANDTDNAKSLFQSASKHIDKAAQKGIIHQNAANRQKSRLANKINAL.

Belongs to the bacterial ribosomal protein bS20 family.

Binds directly to 16S ribosomal RNA. This is Small ribosomal subunit protein bS20 from Oceanobacillus iheyensis (strain DSM 14371 / CIP 107618 / JCM 11309 / KCTC 3954 / HTE831).